We begin with the raw amino-acid sequence, 255 residues long: Pyridoxine 5'-phosphate synthase (255 aa).

Residues asparagine 8 and arginine 19 each contribute to the 3-amino-2-oxopropyl phosphate site. The active-site Proton acceptor is histidine 44. Positions 46 and 51 each coordinate 1-deoxy-D-xylulose 5-phosphate. Glutamate 74 acts as the Proton acceptor in catalysis. Position 111 (threonine 111) interacts with 1-deoxy-D-xylulose 5-phosphate. Histidine 202 (proton donor) is an active-site residue. Residues aspartate 203 and 225–226 (GH) contribute to the 3-amino-2-oxopropyl phosphate site.

It belongs to the PNP synthase family. Homooctamer; tetramer of dimers.

The protein resides in the cytoplasm. The catalysed reaction is 3-amino-2-oxopropyl phosphate + 1-deoxy-D-xylulose 5-phosphate = pyridoxine 5'-phosphate + phosphate + 2 H2O + H(+). The protein operates within cofactor biosynthesis; pyridoxine 5'-phosphate biosynthesis; pyridoxine 5'-phosphate from D-erythrose 4-phosphate: step 5/5. Catalyzes the complicated ring closure reaction between the two acyclic compounds 1-deoxy-D-xylulose-5-phosphate (DXP) and 3-amino-2-oxopropyl phosphate (1-amino-acetone-3-phosphate or AAP) to form pyridoxine 5'-phosphate (PNP) and inorganic phosphate. The protein is Pyridoxine 5'-phosphate synthase of Xanthomonas axonopodis pv. citri (strain 306).